Reading from the N-terminus, the 363-residue chain is Aminomethyltransferase (363 aa).

The protein belongs to the GcvT family. The glycine cleavage system is composed of four proteins: P, T, L and H.

The catalysed reaction is N(6)-[(R)-S(8)-aminomethyldihydrolipoyl]-L-lysyl-[protein] + (6S)-5,6,7,8-tetrahydrofolate = N(6)-[(R)-dihydrolipoyl]-L-lysyl-[protein] + (6R)-5,10-methylene-5,6,7,8-tetrahydrofolate + NH4(+). Its function is as follows. The glycine cleavage system catalyzes the degradation of glycine. The protein is Aminomethyltransferase of Thermosipho melanesiensis (strain DSM 12029 / CIP 104789 / BI429).